The sequence spans 231 residues: Orotate phosphoribosyltransferase (231 aa).

5-phospho-alpha-D-ribose 1-diphosphate is bound by residues Lys27, 79–80 (YK), Arg106, Lys107, Lys110, His112, and 133–141 (DDVMTAGTA). Orotate contacts are provided by Thr137 and Arg166.

Belongs to the purine/pyrimidine phosphoribosyltransferase family. PyrE subfamily. In terms of assembly, homodimer. Mg(2+) serves as cofactor.

It carries out the reaction orotidine 5'-phosphate + diphosphate = orotate + 5-phospho-alpha-D-ribose 1-diphosphate. The protein operates within pyrimidine metabolism; UMP biosynthesis via de novo pathway; UMP from orotate: step 1/2. In terms of biological role, catalyzes the transfer of a ribosyl phosphate group from 5-phosphoribose 1-diphosphate to orotate, leading to the formation of orotidine monophosphate (OMP). The sequence is that of Orotate phosphoribosyltransferase from Bifidobacterium longum (strain NCC 2705).